The chain runs to 215 residues: MIIATLTGRTIEDMVELAIEAVEQGADALEVRLDYLENLDMSTALRAVRECTRYERVVATLRREEEGGLYKGDEDRRLEILERVSSEADYVDLELDVAEEEIISPSCETIVSYHNFENTPPKEELIGIRDRCAELGDVAKVVTMARGHEDALRILEVVRTAEAPTIGFAMGEEAKYTRVVSVLIGGFATYAAVRKKAAPGQLTVEETRKLLELLG.

Residues 30 to 32 (EVR) and Arg62 contribute to the 3-dehydroquinate site. His114 functions as the Proton donor/acceptor in the catalytic mechanism. Residue Lys140 is the Schiff-base intermediate with substrate of the active site. Residues Arg178 and Gln201 each contribute to the 3-dehydroquinate site.

It belongs to the type-I 3-dehydroquinase family. Homodimer.

The enzyme catalyses 3-dehydroquinate = 3-dehydroshikimate + H2O. Its pathway is metabolic intermediate biosynthesis; chorismate biosynthesis; chorismate from D-erythrose 4-phosphate and phosphoenolpyruvate: step 3/7. Its function is as follows. Involved in the third step of the chorismate pathway, which leads to the biosynthesis of aromatic amino acids. Catalyzes the cis-dehydration of 3-dehydroquinate (DHQ) and introduces the first double bond of the aromatic ring to yield 3-dehydroshikimate. In Methanopyrus kandleri (strain AV19 / DSM 6324 / JCM 9639 / NBRC 100938), this protein is 3-dehydroquinate dehydratase.